A 416-amino-acid chain; its full sequence is DNA-guanine transglycosylase (416 aa).

Asp95 acts as the Proton acceptor in catalysis. Residue Asp256 is the Nucleophile of the active site. Residues Cys368, Cys370, Cys373, and His395 each coordinate Zn(2+).

It belongs to the DNA-guanine transglycosylase family. Zn(2+) serves as cofactor.

Part of the dpd cluster involved in the insertion of 7-deazaguanine derivatives in DNA. DpdA may insert 7-cyano-7-deazaguanine (preQ0) into DNA with the help of DpdB. DpdA and dpdB are necessary and sufficient to synthesize 2'-deoxy-7-cyano-7-deazaguanosine (dPreQ0). This Salmonella montevideo protein is DNA-guanine transglycosylase.